Here is a 44-residue protein sequence, read N- to C-terminus: Antibacterial protein 3 homolog (44 aa).

This sequence belongs to the staphylococcal hemolytic protein family.

The protein localises to the secreted. Its function is as follows. Has hemolytic activity and also inhibits the growth of gonococci. The chain is Antibacterial protein 3 homolog from Staphylococcus haemolyticus (strain JCSC1435).